The sequence spans 204 residues: MAETARTAPAVDFVGGAVGYRFRTQAGRSHALLKATGLSPTRSLHVIDATAGLGRDAFLLASMGATVTLIERVPEVHALLADALEAARAESDELAAIIGRMTLLHGDARVLLPTLQADVITIDPMHPPRTKTALVKQEMRLLRDLVGADPDVGELLAAALSADCGRVVLKWPLRAAAPPASRKPSHQIAGKTVRYDVYVRPRAT.

S-adenosyl-L-methionine contacts are provided by residues 55–56, 71–72, and D123; these read RD and ER.

The protein belongs to the methyltransferase superfamily. RsmJ family.

It localises to the cytoplasm. It catalyses the reaction guanosine(1516) in 16S rRNA + S-adenosyl-L-methionine = N(2)-methylguanosine(1516) in 16S rRNA + S-adenosyl-L-homocysteine + H(+). Its function is as follows. Specifically methylates the guanosine in position 1516 of 16S rRNA. The polypeptide is Ribosomal RNA small subunit methyltransferase J (Rhodopseudomonas palustris (strain TIE-1)).